The following is a 513-amino-acid chain: Maturase K (513 aa).

It belongs to the intron maturase 2 family. MatK subfamily.

It localises to the plastid. Its subcellular location is the chloroplast. Usually encoded in the trnK tRNA gene intron. Probably assists in splicing its own and other chloroplast group II introns. This is Maturase K from Molinia caerulea (Purple moor-grass).